Here is a 275-residue protein sequence, read N- to C-terminus: Serine/threonine-protein phosphatase PGAM5, mitochondrial (275 aa).

Residues 7-24 (LIAGGSAAAAILGVVAAG) form a helical membrane-spanning segment.

It belongs to the phosphoglycerate mutase family. BPG-dependent PGAM subfamily. Phosphorylated by the RIPK1/RIPK3 complex under necrotic conditions. This phosphorylation increases PGAM5 phosphatase activity.

It is found in the mitochondrion outer membrane. It catalyses the reaction O-phospho-L-seryl-[protein] + H2O = L-seryl-[protein] + phosphate. It carries out the reaction O-phospho-L-threonyl-[protein] + H2O = L-threonyl-[protein] + phosphate. Its function is as follows. Displays phosphatase activity for serine/threonine residues. Has apparently no phosphoglycerate mutase activity. May be regulator of mitochondrial dynamics. May be a central mediator for programmed necrosis. In Xenopus laevis (African clawed frog), this protein is Serine/threonine-protein phosphatase PGAM5, mitochondrial (pgam5).